The primary structure comprises 215 residues: AN1-type zinc finger protein C1271.05c (215 aa).

Residues 116–128 (IPSISKSNLTNPP) show a composition bias toward polar residues. Residues 116–138 (IPSISKSNLTNPPLESEKSSDKA) form a disordered region. An AN1-type zinc finger spans residues 144-193 (ATSRRRCCHPTCTRITLRLAGNCLHCNGRFCAAHRLMEDHDCVALFSLRK). Zn(2+)-binding residues include Cys150, Cys155, Cys166, Cys169, Cys174, His177, His183, and Cys185.

Its subcellular location is the cytoplasm. It is found in the nucleus. This chain is AN1-type zinc finger protein C1271.05c, found in Schizosaccharomyces pombe (strain 972 / ATCC 24843) (Fission yeast).